The sequence spans 197 residues: MRHRKKGKKIGRTASHRKRTLQSLSNALIENKSITTTVAKAKALRPFVEPLITRAKEDTQHNRREVFRHLQSNDAIDELFGEVSERVGDRPGGYTRIIKLGQRSGDGAELALIELVDYNDVPPADTGQGGSGGTRRGSGKGRRTSTEEEQADASSSGDSSDEESESVEEDEATAEEASADAEQGEAEEEEESEEDNT.

The disordered stretch occupies residues 120–197 (DVPPADTGQG…EEEESEEDNT (78 aa)). Positions 127-136 (GQGGSGGTRR) are enriched in gly residues. The span at 159–197 (SSDEESESVEEDEATAEEASADAEQGEAEEEEESEEDNT) shows a compositional bias: acidic residues.

This sequence belongs to the bacterial ribosomal protein bL17 family. In terms of assembly, part of the 50S ribosomal subunit. Contacts protein L32.

The chain is Large ribosomal subunit protein bL17 from Salinibacter ruber (strain DSM 13855 / M31).